A 292-amino-acid polypeptide reads, in one-letter code: MNAKNIKQTGILYIVPTPIGNLNDISYRAINILQHVDLIAAENIFHSQILLKHYNILTRTTSLNKDNEKIKSKTLIIQLKNKKNIALISNSGTPLINDPGFYLINECYNHIIKIVPIPGPCAAITALIASGLPANRFCYEGFLPSKQNSRCKILNQIKEEQRTIIFFEVTHRIIESITDIINILGPKRIITFAKELTKKWEIIQKNTSYNILIWLKQNYTYKKGEIVIIISGYNNKNTNLISDAVLKTLKILKTHLSFNKAIKITAGIYKLPKNYLYNYAINNTISKNNDIH.

It belongs to the methyltransferase superfamily. RsmI family.

It localises to the cytoplasm. It catalyses the reaction cytidine(1402) in 16S rRNA + S-adenosyl-L-methionine = 2'-O-methylcytidine(1402) in 16S rRNA + S-adenosyl-L-homocysteine + H(+). Functionally, catalyzes the 2'-O-methylation of the ribose of cytidine 1402 (C1402) in 16S rRNA. This chain is Ribosomal RNA small subunit methyltransferase I, found in Buchnera aphidicola subsp. Baizongia pistaciae (strain Bp).